Here is a 637-residue protein sequence, read N- to C-terminus: Biosynthetic arginine decarboxylase (637 aa).

At Lys101 the chain carries N6-(pyridoxal phosphate)lysine. 286-296 is a substrate binding site; the sequence is FDVGGGLAVDY.

It belongs to the Orn/Lys/Arg decarboxylase class-II family. SpeA subfamily. The cofactor is Mg(2+). It depends on pyridoxal 5'-phosphate as a cofactor.

The catalysed reaction is L-arginine + H(+) = agmatine + CO2. It functions in the pathway amine and polyamine biosynthesis; agmatine biosynthesis; agmatine from L-arginine: step 1/1. Catalyzes the biosynthesis of agmatine from arginine. The polypeptide is Biosynthetic arginine decarboxylase (Shewanella halifaxensis (strain HAW-EB4)).